The following is a 223-amino-acid chain: MDIANQLYMKLREEYKIDQKEFISSYICGKTRNVFATILATILSQNSTDKSALIAFSKLNETVGEITPDRIKHADINTIIDAIRVAGLGNSKARYIKNVAEVINDLDLNIEIDCQKLRDFLTAIEGIGDKTADVVLLTCFRCREFPIDTHIRRVISRLGFLGSSPKYKDISEYFKTRFSSEDLLNLHHLLIAHGRKTCKSRKPICDKCVIRDYCKYYLDNIKN.

Residues 118–137 form the HhH domain; sequence RDFLTAIEGIGDKTADVVLL. [4Fe-4S] cluster contacts are provided by C198, C205, C208, and C214.

This sequence belongs to the Nth/MutY family. It depends on [4Fe-4S] cluster as a cofactor.

It catalyses the reaction 2'-deoxyribonucleotide-(2'-deoxyribose 5'-phosphate)-2'-deoxyribonucleotide-DNA = a 3'-end 2'-deoxyribonucleotide-(2,3-dehydro-2,3-deoxyribose 5'-phosphate)-DNA + a 5'-end 5'-phospho-2'-deoxyribonucleoside-DNA + H(+). Probably part of a 4-gene DNA damage response locus in which the upstream ups system, in combination with this downstream locus, functions in homologous recombination to rescue Sulfolobales from DNA-damaging threats. DNA repair enzyme that has both DNA N-glycosylase activity and AP-lyase activity. The DNA N-glycosylase activity releases various damaged pyrimidines from DNA by cleaving the N-glycosidic bond, leaving an AP (apurinic/apyrimidinic) site. The AP-lyase activity cleaves the phosphodiester bond 3' to the AP site by a beta-elimination, leaving a 3'-terminal unsaturated sugar and a product with a terminal 5'-phosphate. Nicks UV-treated plasmid DNA in a dose-dependent manner, has no activity on untreated DNA. The polypeptide is Endonuclease III (Sulfolobus acidocaldarius (strain ATCC 33909 / DSM 639 / JCM 8929 / NBRC 15157 / NCIMB 11770)).